The primary structure comprises 415 residues: Prostacyclin receptor (415 aa).

A disordered region spans residues Met1 to Ala21. The Extracellular segment spans residues Met1–Gly44. 2 disulfides stabilise this stretch: Cys33–Cys193 and Cys120–Cys198. An N-linked (GlcNAc...) asparagine glycan is attached at Asn35. The chain crosses the membrane as a helical span at residues Pro45–Leu66. Residues Gly67–Val79 are Cytoplasmic-facing. Residues Leu80–Ala104 form a helical membrane-spanning segment. At Arg105–Thr122 the chain is on the extracellular side. A helical transmembrane segment spans residues Phe123–Val143. Residues Glu144–Arg162 are Cytoplasmic-facing. Residues Cys163–Leu186 traverse the membrane as a helical segment. The Extracellular segment spans residues Gly187–Ala215. Residues Tyr216–Leu236 traverse the membrane as a helical segment. Over Ser237–Val263 the chain is Cytoplasmic. Residues Tyr264–Phe288 form a helical membrane-spanning segment. At Thr289 to Asp301 the chain is on the extracellular side. Residues Leu302–Phe322 traverse the membrane as a helical segment. Over Arg323 to Cys415 the chain is Cytoplasmic. Positions Pro349–Glu370 are disordered. Phosphoserine is present on Ser365. Cys412 carries the cysteine methyl ester modification. Residue Cys412 is the site of S-farnesyl cysteine attachment. The propeptide at Ser413–Cys415 is removed in mature form.

The protein belongs to the G-protein coupled receptor 1 family. As to quaternary structure, interacts (non-isoprenylated C-terminus) with PDZK1. Post-translationally, isoprenylation does not influence ligand binding but is required for efficient coupling to the effectors adenylyl cyclase and phospholipase C.

The protein resides in the cell membrane. Receptor for prostacyclin (prostaglandin I2 or PGI2). The activity of this receptor is mediated by G(s) proteins which activate adenylate cyclase. This is Prostacyclin receptor (Ptgir) from Mus musculus (Mouse).